The sequence spans 186 residues: Peptidyl-tRNA hydrolase (186 aa).

Tyrosine 16 provides a ligand contact to tRNA. Catalysis depends on histidine 21, which acts as the Proton acceptor. TRNA contacts are provided by tyrosine 60 and asparagine 62.

It belongs to the PTH family. As to quaternary structure, monomer.

The protein resides in the cytoplasm. The enzyme catalyses an N-acyl-L-alpha-aminoacyl-tRNA + H2O = an N-acyl-L-amino acid + a tRNA + H(+). Its function is as follows. Hydrolyzes ribosome-free peptidyl-tRNAs (with 1 or more amino acids incorporated), which drop off the ribosome during protein synthesis, or as a result of ribosome stalling. In terms of biological role, catalyzes the release of premature peptidyl moieties from peptidyl-tRNA molecules trapped in stalled 50S ribosomal subunits, and thus maintains levels of free tRNAs and 50S ribosomes. In Tropheryma whipplei (strain TW08/27) (Whipple's bacillus), this protein is Peptidyl-tRNA hydrolase.